A 162-amino-acid chain; its full sequence is Cytochrome c-type biogenesis protein CcmE (162 aa).

Residues 1 to 8 are Cytoplasmic-facing; sequence MNPVRKKR. The chain crosses the membrane as a helical; Signal-anchor for type II membrane protein span at residues 9–29; the sequence is LIIVLAILVGVGAAVGLALSA. The Periplasmic portion of the chain corresponds to 30–162; it reads LQQNINLFYT…GETSYNQEGK (133 aa). Positions 124 and 128 each coordinate heme. Residues 139–148 are compositionally biased toward basic and acidic residues; that stretch reads DSGQLKHYEN. Residues 139–162 form a disordered region; that stretch reads DSGQLKHYENGKAAGETSYNQEGK.

The protein belongs to the CcmE/CycJ family.

It is found in the cell inner membrane. In terms of biological role, heme chaperone required for the biogenesis of c-type cytochromes. Transiently binds heme delivered by CcmC and transfers the heme to apo-cytochromes in a process facilitated by CcmF and CcmH. This Pseudomonas paraeruginosa (strain DSM 24068 / PA7) (Pseudomonas aeruginosa (strain PA7)) protein is Cytochrome c-type biogenesis protein CcmE.